The sequence spans 335 residues: Fructose-1,6-bisphosphatase class 1 (335 aa).

Mg(2+) contacts are provided by Glu91, Asp113, Leu115, and Asp116. Residues Asp116–Ser119, Asn208, and Lys274 each bind substrate. Glu280 lines the Mg(2+) pocket.

The protein belongs to the FBPase class 1 family. In terms of assembly, homotetramer. Requires Mg(2+) as cofactor.

The protein localises to the cytoplasm. The catalysed reaction is beta-D-fructose 1,6-bisphosphate + H2O = beta-D-fructose 6-phosphate + phosphate. Its pathway is carbohydrate biosynthesis; gluconeogenesis. This Chromobacterium violaceum (strain ATCC 12472 / DSM 30191 / JCM 1249 / CCUG 213 / NBRC 12614 / NCIMB 9131 / NCTC 9757 / MK) protein is Fructose-1,6-bisphosphatase class 1.